Consider the following 567-residue polypeptide: 2-succinyl-5-enolpyruvyl-6-hydroxy-3-cyclohexene-1-carboxylate synthase (567 aa).

Belongs to the TPP enzyme family. MenD subfamily. In terms of assembly, homodimer. Requires Mg(2+) as cofactor. It depends on Mn(2+) as a cofactor. Thiamine diphosphate serves as cofactor.

The catalysed reaction is isochorismate + 2-oxoglutarate + H(+) = 5-enolpyruvoyl-6-hydroxy-2-succinyl-cyclohex-3-ene-1-carboxylate + CO2. It functions in the pathway quinol/quinone metabolism; 1,4-dihydroxy-2-naphthoate biosynthesis; 1,4-dihydroxy-2-naphthoate from chorismate: step 2/7. It participates in quinol/quinone metabolism; menaquinone biosynthesis. Catalyzes the thiamine diphosphate-dependent decarboxylation of 2-oxoglutarate and the subsequent addition of the resulting succinic semialdehyde-thiamine pyrophosphate anion to isochorismate to yield 2-succinyl-5-enolpyruvyl-6-hydroxy-3-cyclohexene-1-carboxylate (SEPHCHC). The sequence is that of 2-succinyl-5-enolpyruvyl-6-hydroxy-3-cyclohexene-1-carboxylate synthase from Yersinia pestis bv. Antiqua (strain Antiqua).